The sequence spans 524 residues: Cytochrome c nitrite reductase subunit NrfA (524 aa).

The N-terminal stretch at 1 to 24 is a signal peptide; that stretch reads MNNQKTFKGLRLAALGLVAVAAFT. An interaction with NrfH region spans residues 29 to 39; the sequence is DVSTELKTPVY. 3 residues coordinate Ca(2+): Gly78, Glu117, and Ala118. Residues His121, Cys147, Cys150, Lys151, Cys187, Cys190, and His191 each contribute to the heme site. Positions 221–222 are interaction with NrfH; the sequence is RN. Residues Cys229, Cys232, and His233 each coordinate heme. The Ca(2+) site is built by Glu235, Tyr236, Lys295, and Gln297. Positions 309, 316, 319, 320, 335, 349, 352, 353, and 434 each coordinate heme. The interval 318–331 is interaction with NrfH; the sequence is DCHMSYTRSDDKKK. The tract at residues 351–355 is interaction with NrfH; it reads QCHSD.

This sequence belongs to the cytochrome c-552 family. Component of the NrfHA cytochrome c nitrite reductase complex composed of 4 NrfA catalytic subunits and 2 NrfH quinone-binding subunits. NrfA homodimer interacts with NrfH. It depends on Ca(2+) as a cofactor. Heme serves as cofactor.

Its subcellular location is the cell inner membrane. It carries out the reaction 6 Fe(III)-[cytochrome c] + NH4(+) + 2 H2O = 6 Fe(II)-[cytochrome c] + nitrite + 8 H(+). Functionally, catalytic subunit of the cytochrome c nitrite reductase holocomplex NrfHA. Has both nitrite and sulfite reductase activities. Catalyzes the reduction of nitrite to ammonia, consuming six electrons acquired by the electron donor subunit NrfH from the menaquinone pool, in an anaerobic respiratory process of nitrite. The other biological function of the NrfHA holocomplex is to detoxify nitrite. This function is essential for the survival of this organism as it enables it to overcome inhibition by nitrite, which is produced by other organisms living in the same environment. This Nitratidesulfovibrio vulgaris (strain ATCC 29579 / DSM 644 / CCUG 34227 / NCIMB 8303 / VKM B-1760 / Hildenborough) (Desulfovibrio vulgaris) protein is Cytochrome c nitrite reductase subunit NrfA.